Consider the following 723-residue polypeptide: F-box protein MAX2 homolog B (723 aa).

Residues alanine 2–leucine 55 enclose the F-box domain.

In terms of assembly, part of a putative SCF (SKP1/Cullin/F-box) ubiquitin ligase complex. Interacts with KAI2IA in the presence of (-)-germacrene D. As to expression, mainly expressed in fully expanded leaves, lateral roots, axillary and shoot apex, and, to a lower extent, in internodes and nodes.

Its subcellular location is the nucleus. The protein localises to the cytoplasm. In terms of biological role, component of SCF(ASK-cullin-F-box) E3 ubiquitin ligase complexes, which may mediate the ubiquitination and subsequent proteasomal degradation of target proteins. Is necessary for responses to strigolactones and may be involved in the ubiquitin-mediated degradation of specific proteins that activate axillary growth. Targets probably SMAX1A to degradation upon the formation of an E3 SCF ubiquitin ligase complex (ASK-cullin-F-box) containing MAX2B and KAI2IA in response to (-)-germacrene D in the stigma. This chain is F-box protein MAX2 homolog B, found in Petunia hybrida (Petunia).